A 34-amino-acid chain; its full sequence is Photosystem II reaction center protein Psb30 (34 aa).

The helical transmembrane segment at 6-26 (VIGQLIATGAIMLAGPAVIVL) threads the bilayer.

The protein belongs to the Psb30/Ycf12 family. In terms of assembly, PSII is composed of 1 copy each of membrane proteins PsbA, PsbB, PsbC, PsbD, PsbE, PsbF, PsbH, PsbI, PsbJ, PsbK, PsbL, PsbM, PsbT, PsbX, PsbY, PsbZ, Psb30/Ycf12, peripheral proteins of the oxygen-evolving complex and a large number of cofactors. It forms dimeric complexes.

The protein resides in the plastid. The protein localises to the chloroplast thylakoid membrane. Functionally, a core subunit of photosystem II (PSII), probably helps stabilize the reaction center. This Trieres chinensis (Marine centric diatom) protein is Photosystem II reaction center protein Psb30.